The sequence spans 92 residues: MNIYVWLFAIIALSFSALVGLRLSFKKGTANVLVGESIITVVAGTLIVVISQKYNLAFADTIALAIFICGVVGAFAFCKVIGGDNEKAKQPN.

The next 3 membrane-spanning stretches (helical) occupy residues Met-1 to Leu-21, Ala-30 to Ile-50, and Ile-62 to Gly-82.

It to M.thermoautotrophicum MTH1250.

The protein localises to the cell membrane. This is an uncharacterized protein from Methanocaldococcus jannaschii (strain ATCC 43067 / DSM 2661 / JAL-1 / JCM 10045 / NBRC 100440) (Methanococcus jannaschii).